A 522-amino-acid polypeptide reads, in one-letter code: ATP synthase subunit alpha 2 (522 aa).

176 to 183 (GDRQTGKT) contributes to the ATP binding site.

It belongs to the ATPase alpha/beta chains family. F-type ATPases have 2 components, CF(1) - the catalytic core - and CF(0) - the membrane proton channel. CF(1) has five subunits: alpha(3), beta(3), gamma(1), delta(1), epsilon(1). CF(0) has three main subunits: a(1), b(2) and c(9-12). The alpha and beta chains form an alternating ring which encloses part of the gamma chain. CF(1) is attached to CF(0) by a central stalk formed by the gamma and epsilon chains, while a peripheral stalk is formed by the delta and b chains.

Its subcellular location is the cell inner membrane. The enzyme catalyses ATP + H2O + 4 H(+)(in) = ADP + phosphate + 5 H(+)(out). Functionally, produces ATP from ADP in the presence of a proton gradient across the membrane. The alpha chain is a regulatory subunit. This Syntrophotalea carbinolica (strain DSM 2380 / NBRC 103641 / GraBd1) (Pelobacter carbinolicus) protein is ATP synthase subunit alpha 2.